Consider the following 250-residue polypeptide: tRNA (guanine-N(1)-)-methyltransferase (250 aa).

S-adenosyl-L-methionine-binding positions include Gly116 and 136-141; that span reads IGDYVL.

It belongs to the RNA methyltransferase TrmD family. In terms of assembly, homodimer.

The protein localises to the cytoplasm. The catalysed reaction is guanosine(37) in tRNA + S-adenosyl-L-methionine = N(1)-methylguanosine(37) in tRNA + S-adenosyl-L-homocysteine + H(+). Functionally, specifically methylates guanosine-37 in various tRNAs. The chain is tRNA (guanine-N(1)-)-methyltransferase from Pseudomonas savastanoi pv. phaseolicola (strain 1448A / Race 6) (Pseudomonas syringae pv. phaseolicola (strain 1448A / Race 6)).